A 600-amino-acid chain; its full sequence is Elongation factor 4 (600 aa).

Positions 5 to 187 (SRIRNFSIIA…AIVTRLPPPK (183 aa)) constitute a tr-type G domain. GTP contacts are provided by residues 17-22 (DHGKST) and 134-137 (NKID).

Belongs to the TRAFAC class translation factor GTPase superfamily. Classic translation factor GTPase family. LepA subfamily.

The protein resides in the cell inner membrane. The catalysed reaction is GTP + H2O = GDP + phosphate + H(+). Its function is as follows. Required for accurate and efficient protein synthesis under certain stress conditions. May act as a fidelity factor of the translation reaction, by catalyzing a one-codon backward translocation of tRNAs on improperly translocated ribosomes. Back-translocation proceeds from a post-translocation (POST) complex to a pre-translocation (PRE) complex, thus giving elongation factor G a second chance to translocate the tRNAs correctly. Binds to ribosomes in a GTP-dependent manner. This Rhodospirillum centenum (strain ATCC 51521 / SW) protein is Elongation factor 4.